Reading from the N-terminus, the 128-residue chain is Large ribosomal subunit protein bL21 (128 aa).

The disordered stretch occupies residues 104-128 (GKKPSVGPRPKRVKAEPAPAADAAE). The span at 119-128 (EPAPAADAAE) shows a compositional bias: low complexity.

Belongs to the bacterial ribosomal protein bL21 family. As to quaternary structure, part of the 50S ribosomal subunit. Contacts protein L20.

Functionally, this protein binds to 23S rRNA in the presence of protein L20. This is Large ribosomal subunit protein bL21 from Rhodopseudomonas palustris (strain BisB5).